Here is a 449-residue protein sequence, read N- to C-terminus: MGKYFGTSGIREVFNEKLTPELALKVGKALGTYLGGGKVVIGKDTRTSGDVIKSAVISGLLSTGVDVIDIGLAPTPLTGFAIKLYGADAGVTITASHNPPEYNGIKVWQANGMAYTSEMERELESIMDSGNFKKAPWNEIGTLRRADPSEEYINAALKFVKLENSYTVVLDSGNGAGSVVSPYLQRELGNRVISLNSHPSGFFVRELEPNAKSLSALAKTVRVMKADVGIAHDGDADRIGVVDDQGNFVEYEVMLSLIAGYMLRKFGKGKIVTTVDAGFALDDYLRPLGGEVIRTRVGDVAVADELAKHGGVFGGEPSGTWIIPQWNLTPDGIFAGALVLEMIDRLGPISELAKEVPRYVTLRAKIPCPNEKKAKAMEIIAREALKTFDYEGLIDIDGIRIENGDWWILFRPSGTEPIMRITLEAHEEEKAKELMGKAERLVKKAISEA.

Serine 96 (phosphoserine intermediate) is an active-site residue. Residues serine 96, aspartate 233, aspartate 235, and aspartate 237 each contribute to the Mg(2+) site. Serine 96 bears the Phosphoserine mark.

It belongs to the phosphohexose mutase family. Mg(2+) serves as cofactor. In terms of processing, activated by phosphorylation.

It carries out the reaction alpha-D-glucosamine 1-phosphate = D-glucosamine 6-phosphate. Its function is as follows. Catalyzes the conversion of glucosamine-6-phosphate to glucosamine-1-phosphate. Does not display phosphoglucomutase (PGM) or phosphomannomutase (PMM) activities. The chain is Probable phosphoglucosamine mutase (glmM) from Thermococcus kodakarensis (strain ATCC BAA-918 / JCM 12380 / KOD1) (Pyrococcus kodakaraensis (strain KOD1)).